Consider the following 243-residue polypeptide: MQHFFYKLILSYDGTFYCGYQKQPQKKTVQQTFEKALKKMTHQNIPTFAASRTDKGVHSQGQTLHFQTTFSLKPKHFQKTLNYLLPPDIRVRQMHFATPNFHARYSAKSKIYQYVFSKKPLNAFNHHFQIFADKFDFVKITKALKFIEGTHNFFAFTSETQPKNFSKTIFQASLKETVHKYILVFHGNGFLKYMIRFLVGSLIEIGKNKFSLEQFQAMLLGNKTKKATLLAPAKALVLKKIFY.

Catalysis depends on Asp-54, which acts as the Nucleophile. Position 112 (Tyr-112) interacts with substrate.

This sequence belongs to the tRNA pseudouridine synthase TruA family. In terms of assembly, homodimer.

The enzyme catalyses uridine(38/39/40) in tRNA = pseudouridine(38/39/40) in tRNA. In terms of biological role, formation of pseudouridine at positions 38, 39 and 40 in the anticodon stem and loop of transfer RNAs. This Aster yellows witches'-broom phytoplasma (strain AYWB) protein is tRNA pseudouridine synthase A.